The sequence spans 398 residues: Phosphoglycerate kinase (398 aa).

Substrate contacts are provided by residues 21-23 (DFN), Arg36, 59-62 (HLGR), Arg119, and Arg157. ATP is bound by residues Lys208, Gly296, Glu327, and 354–357 (GGDS).

It belongs to the phosphoglycerate kinase family. As to quaternary structure, monomer.

The protein localises to the cytoplasm. It catalyses the reaction (2R)-3-phosphoglycerate + ATP = (2R)-3-phospho-glyceroyl phosphate + ADP. It functions in the pathway carbohydrate degradation; glycolysis; pyruvate from D-glyceraldehyde 3-phosphate: step 2/5. This is Phosphoglycerate kinase from Streptococcus equi subsp. equi (strain 4047).